The following is a 362-amino-acid chain: Microfibril-associated glycoprotein 3 (362 aa).

The signal sequence occupies residues 1–18 (MKLHCCLFTLVASIIVPA). The Extracellular segment spans residues 19-147 (AFVLEDVDFD…LRVIFTSGDM (129 aa)). N-linked (GlcNAc...) asparagine glycosylation is found at N36, N41, and N110. Positions 45–137 (PSSFELSASS…SPIRASYSVT (93 aa)) constitute an Ig-like C2-type domain. The cysteines at positions 73 and 124 are disulfide-linked. The helical transmembrane segment at 148-170 (SVYYMIVCLIAFTITLILNVTRL) threads the bilayer. The Cytoplasmic segment spans residues 171–362 (CMMSSHLRKT…KDGAYENCQL (192 aa)). 2 disordered regions span residues 285-306 (VINP…GSLN) and 323-350 (ETKS…ESNC). The span at 323 to 337 (ETKSIDTESQGSSHF) shows a compositional bias: polar residues.

Post-translationally, glycosylated.

It localises to the cell membrane. In terms of biological role, component of the elastin-associated microfibrils. The sequence is that of Microfibril-associated glycoprotein 3 (MFAP3) from Homo sapiens (Human).